The primary structure comprises 142 residues: MNKSQQIATITLAAAKKMAQAVEAKALEINVPVVFSVVDHGGNTLLMQRMDDAFVTSCDISLNKAYTACCLRQGTHEITDAVQPGASLYGLQLTNQQRIVIFGGGLPVILNGKVIGAVGVSGGTVEQDRLLAETALDCFSEL.

This sequence belongs to the GlcG family.

This is an uncharacterized protein from Citrobacter freundii.